A 769-amino-acid polypeptide reads, in one-letter code: Glutathione biosynthesis bifunctional protein GshAB (769 aa).

Residues 1 to 347 are glutamate--cysteine ligase; it reads MLDSFKEDPN…QLADENENNI (347 aa). The ATP-grasp domain maps to 514–768; sequence KLVLAEHDIR…IGDKILDFLF (255 aa). 541–599 contacts ATP; the sequence is SLFEDKQIVVKPKSTNYGWGISIFKNKFTLEDYQEALNIAFSYDSSVIIEEFIPGDEFR. Residues Asp721, Glu738, and Asn740 each coordinate Mg(2+). Mn(2+) is bound by residues Asp721, Glu738, and Asn740.

In the N-terminal section; belongs to the glutamate--cysteine ligase type 1 family. Type 2 subfamily. In terms of assembly, monomer. Mg(2+) serves as cofactor. The cofactor is Mn(2+).

The catalysed reaction is L-cysteine + L-glutamate + ATP = gamma-L-glutamyl-L-cysteine + ADP + phosphate + H(+). It carries out the reaction gamma-L-glutamyl-L-cysteine + glycine + ATP = glutathione + ADP + phosphate + H(+). Its pathway is sulfur metabolism; glutathione biosynthesis; glutathione from L-cysteine and L-glutamate: step 1/2. It functions in the pathway sulfur metabolism; glutathione biosynthesis; glutathione from L-cysteine and L-glutamate: step 2/2. Synthesizes glutathione from L-glutamate and L-cysteine via gamma-L-glutamyl-L-cysteine. This Listeria monocytogenes serovar 1/2a (strain ATCC BAA-679 / EGD-e) protein is Glutathione biosynthesis bifunctional protein GshAB.